The sequence spans 485 residues: Bifunctional protein GlmU (485 aa).

The tract at residues 1–241 (MSASDFSSAV…ARELAGVNDR (241 aa)) is pyrophosphorylase. UDP-N-acetyl-alpha-D-glucosamine is bound by residues 13–16 (LAAG), Lys-27, Gln-84, and 89–90 (GT). Mg(2+) is bound at residue Asp-114. Residues Gly-151, Glu-166, Asn-181, and Asn-239 each contribute to the UDP-N-acetyl-alpha-D-glucosamine site. A Mg(2+)-binding site is contributed by Asn-239. The tract at residues 242–262 (VQLAEAGAELNRRTVIAAMRG) is linker. Positions 263-485 (GATIVDPATT…AAQNVHNQEG (223 aa)) are N-acetyltransferase. Residues Arg-344 and Lys-362 each coordinate UDP-N-acetyl-alpha-D-glucosamine. Catalysis depends on His-374, which acts as the Proton acceptor. Residues Tyr-377 and Asn-388 each contribute to the UDP-N-acetyl-alpha-D-glucosamine site. Acetyl-CoA-binding positions include Ala-391, 397–398 (NY), Ser-416, and Ala-434. Residues 465-485 (RPGTAAAQAAEAAQNVHNQEG) form a disordered region. Over residues 469 to 478 (AAAQAAEAAQ) the composition is skewed to low complexity.

It in the N-terminal section; belongs to the N-acetylglucosamine-1-phosphate uridyltransferase family. In the C-terminal section; belongs to the transferase hexapeptide repeat family. As to quaternary structure, homotrimer. The cofactor is Mg(2+).

The protein localises to the cytoplasm. It carries out the reaction alpha-D-glucosamine 1-phosphate + acetyl-CoA = N-acetyl-alpha-D-glucosamine 1-phosphate + CoA + H(+). The enzyme catalyses N-acetyl-alpha-D-glucosamine 1-phosphate + UTP + H(+) = UDP-N-acetyl-alpha-D-glucosamine + diphosphate. It functions in the pathway nucleotide-sugar biosynthesis; UDP-N-acetyl-alpha-D-glucosamine biosynthesis; N-acetyl-alpha-D-glucosamine 1-phosphate from alpha-D-glucosamine 6-phosphate (route II): step 2/2. The protein operates within nucleotide-sugar biosynthesis; UDP-N-acetyl-alpha-D-glucosamine biosynthesis; UDP-N-acetyl-alpha-D-glucosamine from N-acetyl-alpha-D-glucosamine 1-phosphate: step 1/1. Its pathway is bacterial outer membrane biogenesis; LPS lipid A biosynthesis. Catalyzes the last two sequential reactions in the de novo biosynthetic pathway for UDP-N-acetylglucosamine (UDP-GlcNAc). The C-terminal domain catalyzes the transfer of acetyl group from acetyl coenzyme A to glucosamine-1-phosphate (GlcN-1-P) to produce N-acetylglucosamine-1-phosphate (GlcNAc-1-P), which is converted into UDP-GlcNAc by the transfer of uridine 5-monophosphate (from uridine 5-triphosphate), a reaction catalyzed by the N-terminal domain. The chain is Bifunctional protein GlmU from Corynebacterium glutamicum (strain R).